The following is a 71-amino-acid chain: Conotoxin Pl071 (71 aa).

An N-terminal signal peptide occupies residues 1–20 (MSRLFMILLVICVITLGTDA). The propeptide occupies 21 to 31 (SQAEDSGTEKR). Tyrosine 69 carries the tyrosine amide modification.

The protein belongs to the conotoxin NSf-1 superfamily. In terms of tissue distribution, expressed by the venom duct.

The protein localises to the secreted. In terms of biological role, probable neurotoxin with unknown target. Possibly targets ion channels. This chain is Conotoxin Pl071, found in Conus planorbis (Planorbis cone).